The following is a 215-amino-acid chain: 3-demethoxyubiquinol 3-hydroxylase (215 aa).

Fe cation is bound by residues Glu64, Glu94, His97, Glu146, Glu178, and His181.

It belongs to the COQ7 family. Fe cation is required as a cofactor.

It is found in the cell membrane. The enzyme catalyses a 5-methoxy-2-methyl-3-(all-trans-polyprenyl)benzene-1,4-diol + AH2 + O2 = a 3-demethylubiquinol + A + H2O. Its pathway is cofactor biosynthesis; ubiquinone biosynthesis. In terms of biological role, catalyzes the hydroxylation of 2-nonaprenyl-3-methyl-6-methoxy-1,4-benzoquinol during ubiquinone biosynthesis. This chain is 3-demethoxyubiquinol 3-hydroxylase, found in Pseudomonas putida (strain W619).